We begin with the raw amino-acid sequence, 85 residues long: Cytochrome b (85 aa).

Helical transmembrane passes span Leu-1 to Met-8, Trp-32 to Ile-53, and Trp-68 to Gly-85. Positions 38 and 52 each coordinate heme b.

It belongs to the cytochrome b family. In terms of assembly, the cytochrome bc1 complex contains 3 respiratory subunits (MT-CYB, CYC1 and UQCRFS1), 2 core proteins (UQCRC1 and UQCRC2) and probably 6 low-molecular weight proteins. The cofactor is heme b.

The protein resides in the mitochondrion inner membrane. Component of the ubiquinol-cytochrome c reductase complex (complex III or cytochrome b-c1 complex) that is part of the mitochondrial respiratory chain. The b-c1 complex mediates electron transfer from ubiquinol to cytochrome c. Contributes to the generation of a proton gradient across the mitochondrial membrane that is then used for ATP synthesis. This is Cytochrome b (mt-cyb) from Pomoxis nigromaculatus (Black crappie).